A 260-amino-acid chain; its full sequence is Exosome complex component Rrp4 (260 aa).

In terms of domain architecture, S1 motif spans 59–128 (NDVVIGVVIV…SSMKIELALR (70 aa)). Residues 136-194 (RTGQIVEVEPVKVPRVIGHGGSMISMLKKETNCSIFVGQNGRIWIDGKDEDIELLSKAL) enclose the KH domain.

It belongs to the RRP4 family. Component of the archaeal exosome complex. Forms a trimer of Rrp4 and/or Csl4 subunits. The trimer associates with a hexameric ring-like arrangement composed of 3 Rrp41-Rrp42 heterodimers.

The protein resides in the cytoplasm. Functionally, non-catalytic component of the exosome, which is a complex involved in RNA degradation. Increases the RNA binding and the efficiency of RNA degradation. Confers strong poly(A) specificity to the exosome. The sequence is that of Exosome complex component Rrp4 from Methanosarcina mazei (strain ATCC BAA-159 / DSM 3647 / Goe1 / Go1 / JCM 11833 / OCM 88) (Methanosarcina frisia).